The following is a 562-amino-acid chain: Arginine--tRNA ligase (562 aa).

The 'HIGH' region signature appears at 129–139 (ANPTGPLHVGH).

It belongs to the class-I aminoacyl-tRNA synthetase family. In terms of assembly, monomer.

It localises to the cytoplasm. It carries out the reaction tRNA(Arg) + L-arginine + ATP = L-arginyl-tRNA(Arg) + AMP + diphosphate. This chain is Arginine--tRNA ligase, found in Xanthomonas axonopodis pv. citri (strain 306).